Reading from the N-terminus, the 189-residue chain is Nuclear distribution protein nudE homolog 1 (189 aa).

Positions 4–121 (NLDLETAIQI…LRVSKEEATS (118 aa)) form a coiled coil. Residues 114-126 (VSKEEATSGETRR) show a composition bias toward basic and acidic residues. The interval 114 to 139 (VSKEEATSGETRRNTRSLPSQNKKMK) is disordered.

This sequence belongs to the nudE family. Self-associates. Interacts with PAC1.

It is found in the nucleus. It localises to the cytoplasm. The protein resides in the cytoskeleton. Functionally, required for nuclear migration to the bud neck during cell division. Targets cytoplasmic dynein to microtubule plus ends thereby promoting dynein-mediated microtubule sliding along the bud cortex and consequently the movement of the mitotic spindle to the bud neck. In Saccharomyces cerevisiae (strain ATCC 204508 / S288c) (Baker's yeast), this protein is Nuclear distribution protein nudE homolog 1 (NDL1).